Consider the following 220-residue polypeptide: Flagellin A2 (220 aa).

The propeptide occupies 1–11 (MFNNITDDDRG). Residues asparagine 78, asparagine 95, asparagine 112, and asparagine 124 are each glycosylated (N-linked (GlcNAc...) asparagine).

It belongs to the archaeal flagellin family. In terms of processing, glycosylated by a pentasaccharide similar to the S-layer glycoprotein, probably comprising a hexose, 2 hexuronic acids, a methyl ester of a hexuronic acid and mannose.

The protein localises to the archaeal flagellum. Its function is as follows. Flagellin that plays both structural and regulatory roles in flagella biosynthesis. Does not constitute a major flagellin in terms of abundance contrary to FlgA1: may regulate the flagella-dependent swimming motility depending on the relative abundance of FlgA1. Not involved in PibD-dependent surface adhesion. The sequence is that of Flagellin A2 (flgA2) from Haloferax volcanii (strain ATCC 29605 / DSM 3757 / JCM 8879 / NBRC 14742 / NCIMB 2012 / VKM B-1768 / DS2) (Halobacterium volcanii).